A 99-amino-acid polypeptide reads, in one-letter code: ATP-dependent Clp protease adapter protein ClpS (99 aa).

Belongs to the ClpS family. As to quaternary structure, binds to the N-terminal domain of the chaperone ClpA.

Its function is as follows. Involved in the modulation of the specificity of the ClpAP-mediated ATP-dependent protein degradation. The chain is ATP-dependent Clp protease adapter protein ClpS from Helicobacter hepaticus (strain ATCC 51449 / 3B1).